Consider the following 275-residue polypeptide: Protein COFACTOR ASSEMBLY OF COMPLEX C SUBUNIT B CCB2, chloroplastic (275 aa).

The N-terminal 19 residues, 1 to 19 (MSIQICNFPFHPKFALQPR), are a transit peptide targeting the chloroplast. Over 20–65 (AQRSTRIFARTENDSPQSKTSDQQLNLSVLRFTFGIPGFDESYLPR) the chain is Stromal. A helical membrane pass occupies residues 66–86 (WIGYGFGSLLLLNHFSASAPI). Over 87–93 (SESQMRS) the chain is Lumenal. The helical transmembrane segment at 94–114 (EALGLSLAAFSIALPYIGKFL) threads the bilayer. Topologically, residues 115–275 (KGSVVEQRSL…IGAMAEKFRG (161 aa)) are stromal.

Its subcellular location is the plastid. It localises to the chloroplast thylakoid membrane. Functionally, required for the biogenesis and accumulation of native cytochrome b6 in the thylakoid membrane. Controls the conversion of apocytochrome b6 to holocytochrome b6. Required for covalent binding of the c-type heme to cytochrome b6. The chain is Protein COFACTOR ASSEMBLY OF COMPLEX C SUBUNIT B CCB2, chloroplastic from Arabidopsis thaliana (Mouse-ear cress).